An 81-amino-acid chain; its full sequence is Protein Vpu (81 aa).

The Extracellular segment spans residues 1–6 (MQPIQI). The helical transmembrane segment at 7-27 (AIAALVVAIIIAIVVWSIVII) threads the bilayer. Residues 28-81 (EYRKILRQRKIDRLIDRLIERAEDSGNESEGEISALVEMGVEMGHHAPWDIDDL) are Cytoplasmic-facing. A phosphoserine; by host CK2 mark is found at Ser-52 and Ser-56.

This sequence belongs to the HIV-1 VPU protein family. Homopentamer. Interacts with host CD4 and BRTC; these interactions induce proteasomal degradation of CD4. Interacts with host BST2; this interaction leads to the degradation of host BST2. Interacts with host FBXW11. Interacts with host AP1M1; this interaction plays a role in the mistrafficking and subsequent degradation of host BST2. Interacts with host RANBP2; this interaction allows Vpu to down-regulate host BLM sumoylation. Post-translationally, phosphorylated by host CK2. This phosphorylation is necessary for interaction with human BTRC and degradation of CD4.

Its subcellular location is the host membrane. With respect to regulation, ion channel activity is inhibited by hexamethylene amiloride in vitro. Its function is as follows. Enhances virion budding by targeting host CD4 and Tetherin/BST2 to proteasome degradation. Degradation of CD4 prevents any unwanted premature interactions between viral Env and its host receptor CD4 in the endoplasmic reticulum. Degradation of antiretroviral protein Tetherin/BST2 is important for virion budding, as BST2 tethers new viral particles to the host cell membrane. Mechanistically, Vpu bridges either CD4 or BST2 to BTRC, a substrate recognition subunit of the Skp1/Cullin/F-box protein E3 ubiquitin ligase, induces their ubiquitination and subsequent proteasomal degradation. The alteration of the E3 ligase specificity by Vpu seems to promote the degradation of host IKBKB, leading to NF-kappa-B down-regulation and subsequent apoptosis. Acts as a viroporin that forms an oligomeric ion channel in membranes. Modulates the host DNA repair mechanisms to promote degradation of nuclear viral cDNA in cells that are already productively infected in order to suppress immune sensing and proviral hyper-integration (superinfection). Manipulates PML-NBs and modulates SUMOylation of host BLM protein thereby enhancing its DNA-end processing activity toward viral unintegrated linear DNA. Also inhibits RAD52-mediated homologous repair of viral cDNA, preventing the generation of dead-end circular forms of single copies of the long terminal repeat and permitting sustained nucleolytic attack. This is Protein Vpu from Homo sapiens (Human).